We begin with the raw amino-acid sequence, 210 residues long: Keratin-associated protein 26-1 (210 aa).

Belongs to the PMG family. In terms of assembly, interacts with hair keratins. As to expression, localized high up in the well differentiated portion of the hair follicle cuticle (about 10-15 cell layers above the apex of the dermal papilla).

In terms of biological role, in the hair cortex, hair keratin intermediate filaments are embedded in an interfilamentous matrix, consisting of hair keratin-associated proteins (KRTAP), which are essential for the formation of a rigid and resistant hair shaft through their extensive disulfide bond cross-linking with abundant cysteine residues of hair keratins. The matrix proteins include the high-sulfur and high-glycine-tyrosine keratins. This chain is Keratin-associated protein 26-1 (KRTAP26-1), found in Homo sapiens (Human).